A 130-amino-acid chain; its full sequence is Succinate dehydrogenase assembly factor 3, mitochondrial (130 aa).

The N-terminal 8 residues, 1-8 (MRPSLLRL), are a transit peptide targeting the mitochondrion.

Belongs to the complex I LYR family. SDHAF3 subfamily. As to quaternary structure, interacts with the iron-sulfur protein subunit within the SDH catalytic dimer.

It localises to the mitochondrion matrix. Functionally, plays an essential role in the assembly of succinate dehydrogenase (SDH), an enzyme complex (also referred to as respiratory complex II) that is a component of both the tricarboxylic acid (TCA) cycle and the mitochondrial electron transport chain, and which couples the oxidation of succinate to fumarate with the reduction of ubiquinone (coenzyme Q) to ubiquinol. Promotes maturation of the iron-sulfur protein subunit of the SDH catalytic dimer, protecting it from the deleterious effects of oxidants. May act together with SDHAF1. This chain is Succinate dehydrogenase assembly factor 3, mitochondrial, found in Gibberella zeae (strain ATCC MYA-4620 / CBS 123657 / FGSC 9075 / NRRL 31084 / PH-1) (Wheat head blight fungus).